The chain runs to 332 residues: L-lactate dehydrogenase A chain (332 aa).

Residue alanine 2 is modified to N-acetylalanine. Lysine 5 is modified (N6-acetyllysine; alternate). Lysine 5 is modified (N6-succinyllysine; alternate). An N6-acetyllysine modification is found at lysine 14. Threonine 18 is subject to Phosphothreonine. Residue 29–57 (GAVGMACAISILMKDLADELALVDVIEDK) coordinates NAD(+). Position 57 is an N6-acetyllysine; alternate (lysine 57). A Glycyl lysine isopeptide (Lys-Gly) (interchain with G-Cter in SUMO2); alternate cross-link involves residue lysine 57. Lysine 81 is subject to N6-acetyllysine. Residue arginine 99 participates in NAD(+) binding. Arginine 106 contacts substrate. Lysine 118 bears the N6-acetyllysine; alternate mark. Lysine 118 carries the N6-succinyllysine; alternate modification. Lysine 126 carries the N6-acetyllysine modification. Substrate contacts are provided by asparagine 138 and arginine 169. Catalysis depends on histidine 193, which acts as the Proton acceptor. Lysine 224 and lysine 232 each carry N6-acetyllysine. Tyrosine 239 bears the Phosphotyrosine mark. Lysine 243 carries the N6-acetyllysine modification. Substrate is bound at residue threonine 248. Threonine 309 is modified (phosphothreonine). At serine 310 the chain carries Phosphoserine. N6-acetyllysine; alternate is present on lysine 318. Lysine 318 carries the N6-succinyllysine; alternate modification. Threonine 322 carries the phosphothreonine modification.

The protein belongs to the LDH/MDH superfamily. LDH family. As to quaternary structure, homotetramer. Interacts with PTEN upstream reading frame protein MP31. ISGylated.

Its subcellular location is the cytoplasm. It catalyses the reaction (S)-lactate + NAD(+) = pyruvate + NADH + H(+). It participates in fermentation; pyruvate fermentation to lactate; (S)-lactate from pyruvate: step 1/1. Functionally, interconverts simultaneously and stereospecifically pyruvate and lactate with concomitant interconversion of NADH and NAD(+). This Pan troglodytes (Chimpanzee) protein is L-lactate dehydrogenase A chain (LDHA).